Here is a 447-residue protein sequence, read N- to C-terminus: Trigger factor (447 aa).

Positions 164–249 (GDLVVIDFIG…VKEVKQAVVP (86 aa)) constitute a PPIase FKBP-type domain.

The protein belongs to the FKBP-type PPIase family. Tig subfamily.

It is found in the cytoplasm. It catalyses the reaction [protein]-peptidylproline (omega=180) = [protein]-peptidylproline (omega=0). Functionally, involved in protein export. Acts as a chaperone by maintaining the newly synthesized protein in an open conformation. Functions as a peptidyl-prolyl cis-trans isomerase. This Rhodospirillum rubrum (strain ATCC 11170 / ATH 1.1.1 / DSM 467 / LMG 4362 / NCIMB 8255 / S1) protein is Trigger factor.